The chain runs to 117 residues: Large ribosomal subunit protein bL20 (117 aa).

The protein belongs to the bacterial ribosomal protein bL20 family.

In terms of biological role, binds directly to 23S ribosomal RNA and is necessary for the in vitro assembly process of the 50S ribosomal subunit. It is not involved in the protein synthesizing functions of that subunit. This chain is Large ribosomal subunit protein bL20, found in Geobacter metallireducens (strain ATCC 53774 / DSM 7210 / GS-15).